A 233-amino-acid polypeptide reads, in one-letter code: Nickel import system ATP-binding protein NikE (233 aa).

Positions 2–228 constitute an ABC transporter domain; that stretch reads IELKHVTFGY…DRHSYTKELV (227 aa). 35–42 is an ATP binding site; that stretch reads GESGCGKS.

The protein belongs to the ABC transporter superfamily. In terms of assembly, the complex is composed of two ATP-binding proteins (NikD and NikE), two transmembrane proteins (NikB and NikC) and a solute-binding protein (NikA).

Its subcellular location is the cell membrane. It catalyses the reaction Ni(2+)(out) + ATP + H2O = Ni(2+)(in) + ADP + phosphate + H(+). In terms of biological role, part of the ABC transporter complex NikABCDE (Opp2) involved in nickel import. Probably responsible for energy coupling to the transport system. The protein is Nickel import system ATP-binding protein NikE of Staphylococcus aureus (strain bovine RF122 / ET3-1).